The sequence spans 414 residues: tRNA methyltransferase 10 homolog C (414 aa).

The transit peptide at 1-35 directs the protein to the mitochondrion; sequence MNVTVRFLRPFARCLVPYTFHRKRSHLYSGVLQRY. Ser-79 bears the Phosphoserine mark. Residues 133-171 adopt a coiled-coil conformation; it reads GKEKAKKAKQVKKEMKAEAREEAKRARLLETTAEEQQQD. Positions 186–378 constitute an SAM-dependent MTase TRM10-type domain; it reads LGWKGVQAMQ…KFVPRRKHTG (193 aa).

This sequence belongs to the class IV-like SAM-binding methyltransferase superfamily. TRM10 family. As to quaternary structure, component of mitochondrial ribonuclease P, a complex composed of TRMT10C/MRPP1, HSD17B10/MRPP2 and PRORP/MRPP3. Interacts with HSD17B10/MRPP2; forming the MRPP1-MRPP2 subcomplex of the mitochondrial ribonuclease P complex. Interacts with GRSF1.

The protein resides in the mitochondrion matrix. Its subcellular location is the mitochondrion nucleoid. The catalysed reaction is adenosine(9) in tRNA + S-adenosyl-L-methionine = N(1)-methyladenosine(9) in tRNA + S-adenosyl-L-homocysteine + H(+). The enzyme catalyses guanosine(9) in tRNA + S-adenosyl-L-methionine = N(1)-methylguanosine(9) in tRNA + S-adenosyl-L-homocysteine + H(+). It carries out the reaction an adenosine in mRNA + S-adenosyl-L-methionine = an N(1)-methyladenosine in mRNA + S-adenosyl-L-homocysteine + H(+). Its function is as follows. Mitochondrial tRNA N(1)-methyltransferase involved in mitochondrial tRNA maturation. Component of mitochondrial ribonuclease P, a complex composed of TRMT10C/MRPP1, HSD17B10/MRPP2 and PRORP/MRPP3, which cleaves tRNA molecules in their 5'-ends. Together with HSD17B10/MRPP2, forms a subcomplex of the mitochondrial ribonuclease P, named MRPP1-MRPP2 subcomplex, which displays functions that are independent of the ribonuclease P activity. The MRPP1-MRPP2 subcomplex catalyzes the formation of N(1)-methylguanine and N(1)-methyladenine at position 9 (m1G9 and m1A9, respectively) in tRNAs; TRMT10C/MRPP1 acting as the catalytic N(1)-methyltransferase subunit. The MRPP1-MRPP2 subcomplex also acts as a tRNA maturation platform: following 5'-end cleavage by the mitochondrial ribonuclease P complex, the MRPP1-MRPP2 subcomplex enhances the efficiency of 3'-processing catalyzed by ELAC2, retains the tRNA product after ELAC2 processing and presents the nascent tRNA to the mitochondrial CCA tRNA nucleotidyltransferase TRNT1 enzyme. In addition to tRNA N(1)-methyltransferase activity, TRMT10C/MRPP1 also acts as a mRNA N(1)-methyltransferase by mediating methylation of adenosine residues at the N(1) position of MT-ND5 mRNA. Associates with mitochondrial DNA complexes at the nucleoids to initiate RNA processing and ribosome assembly. This chain is tRNA methyltransferase 10 homolog C, found in Mus musculus (Mouse).